Consider the following 337-residue polypeptide: Ribosomal RNA small subunit methyltransferase H (337 aa).

Residues Gly36–His38, Asp56, Phe82, Asp100, and Gln107 each bind S-adenosyl-L-methionine. Positions Leu315 to Gln337 are disordered.

The protein belongs to the methyltransferase superfamily. RsmH family.

The protein localises to the cytoplasm. The catalysed reaction is cytidine(1402) in 16S rRNA + S-adenosyl-L-methionine = N(4)-methylcytidine(1402) in 16S rRNA + S-adenosyl-L-homocysteine + H(+). Its function is as follows. Specifically methylates the N4 position of cytidine in position 1402 (C1402) of 16S rRNA. This Xanthomonas euvesicatoria pv. vesicatoria (strain 85-10) (Xanthomonas campestris pv. vesicatoria) protein is Ribosomal RNA small subunit methyltransferase H.